A 611-amino-acid chain; its full sequence is Chaperone protein DnaK (611 aa).

Thr-173 is subject to Phosphothreonine; by autocatalysis. Positions 579-592 are enriched in low complexity; the sequence is AAGQAEGAQGAQDA. The interval 579-611 is disordered; sequence AAGQAEGAQGAQDAGAKKDNVVDAEFEEVKEDK. Positions 600–611 are enriched in acidic residues; it reads VDAEFEEVKEDK.

The protein belongs to the heat shock protein 70 family.

Its function is as follows. Acts as a chaperone. The polypeptide is Chaperone protein DnaK (Bacillus mycoides (strain KBAB4) (Bacillus weihenstephanensis)).